Consider the following 290-residue polypeptide: Beta-lactamase OXY-2 (290 aa).

The signal sequence occupies residues 1–27 (MIKSSWRKIAMLAAAVPLLLASGALWA). Ser-72 (acyl-ester intermediate) is an active-site residue. 236-238 (KTG) serves as a coordination point for substrate.

The protein belongs to the class-A beta-lactamase family.

The enzyme catalyses a beta-lactam + H2O = a substituted beta-amino acid. Functionally, hydrolyzes broad-spectrum beta-lactam antibiotics. Active against all third-generation cephalosporins but ceftazidime. The chain is Beta-lactamase OXY-2 (bla) from Klebsiella oxytoca.